The sequence spans 646 residues: Phosphomethylpyrimidine synthase (646 aa).

A compositionally biased stretch (polar residues) spans 1 to 13 (MNIRSNPDTTRPA). A disordered region spans residues 1–30 (MNIRSNPDTTRPAVTTGALPSSRKMFSAPD). Substrate contacts are provided by residues asparagine 221, methionine 250, tyrosine 279, histidine 315, 335–337 (SRG), 376–379 (DGLR), and glutamate 415. Histidine 419 is a Zn(2+) binding site. Substrate is bound at residue tyrosine 442. Position 483 (histidine 483) interacts with Zn(2+). The [4Fe-4S] cluster site is built by cysteine 563, cysteine 566, and cysteine 571.

The protein belongs to the ThiC family. As to quaternary structure, homodimer. [4Fe-4S] cluster serves as cofactor.

The catalysed reaction is 5-amino-1-(5-phospho-beta-D-ribosyl)imidazole + S-adenosyl-L-methionine = 4-amino-2-methyl-5-(phosphooxymethyl)pyrimidine + CO + 5'-deoxyadenosine + formate + L-methionine + 3 H(+). It participates in cofactor biosynthesis; thiamine diphosphate biosynthesis. Its function is as follows. Catalyzes the synthesis of the hydroxymethylpyrimidine phosphate (HMP-P) moiety of thiamine from aminoimidazole ribotide (AIR) in a radical S-adenosyl-L-methionine (SAM)-dependent reaction. This chain is Phosphomethylpyrimidine synthase, found in Nitrobacter winogradskyi (strain ATCC 25391 / DSM 10237 / CIP 104748 / NCIMB 11846 / Nb-255).